The primary structure comprises 444 residues: NAD(P)-specific glutamate dehydrogenase (444 aa).

Residues lysine 88, glutamine 109, and lysine 112 each coordinate substrate. Lysine 124 functions as the Proton donor in the catalytic mechanism. A substrate-binding site is contributed by glycine 163. Threonine 207 and asparagine 238 together coordinate NADP(+). Residue serine 376 participates in substrate binding.

Belongs to the Glu/Leu/Phe/Val dehydrogenases family. As to quaternary structure, homohexamer.

It catalyses the reaction L-glutamate + NAD(+) + H2O = 2-oxoglutarate + NH4(+) + NADH + H(+). It carries out the reaction L-glutamate + NADP(+) + H2O = 2-oxoglutarate + NH4(+) + NADPH + H(+). In terms of biological role, catalyzes the reversible oxidative deamination of glutamate to alpha-ketoglutarate and ammonia. P.ruminicola possess both NADP(H)- and NAD(H)-dependent activities on the same enzyme, suggesting that both anabolic and catabolic forms of the enzyme might occur. In Xylanibacter ruminicola (Prevotella ruminicola), this protein is NAD(P)-specific glutamate dehydrogenase (gdhA).